A 516-amino-acid polypeptide reads, in one-letter code: Levanbiose-producing levanase (516 aa).

The Cytoplasmic segment spans residues 1–5 (MNYIK). Residues 6 to 26 (AGKWLTVFLTFLGILLFIDLF) form a helical membrane-spanning segment. At 27–516 (PKEEHDQKTK…TVKHFDSIHE (490 aa)) the chain is on the extracellular side. Residues 55 to 58 (WKND), 116 to 117 (WT), 181 to 182 (RD), Glu230, and Trp318 each bind substrate. Residue Asp58 is part of the active site.

This sequence belongs to the glycosyl hydrolase 32 family.

Its subcellular location is the cell membrane. The catalysed reaction is Hydrolysis of (2-&gt;6)-beta-D-fructofuranan, to remove successive disaccharide residues as levanbiose, i.e. 6-(beta-D-fructofuranosyl)-D-fructose, from the end of the chain.. In terms of biological role, catalyzes the degradation of levan mainly into levanbiose (difructose). Is not active on sucrose. This Bacillus subtilis (strain 168) protein is Levanbiose-producing levanase (levB).